Consider the following 153-residue polypeptide: Natriuretic peptides A (153 aa).

A signal peptide spans 1–25; it reads MGSFSTITASFLLFLACQLLWQTGA. 2 propeptides span residues 26-123 and 93-103; these read NPVY…AAPR and DGGALGRGSWD. The tract at residues 62-104 is disordered; that stretch reads VLSEQNEEAGAALSPLPEVPPWAGEVNPAQRDGGALGRGSWDS. The residue at position 129 (Ser-129) is a Phosphoserine. Cys-130 and Cys-146 are disulfide-bonded. An important for degradation of atrial natriuretic peptide by IDE region spans residues 147–151; it reads NSFRY.

The protein belongs to the natriuretic peptide family. In terms of assembly, homodimer; disulfide-linked antiparallel dimer. In terms of processing, the precursor molecule is proteolytically cleaved by CORIN at Arg-123 to produce the atrial natriuretic peptide. Undergoes further proteolytic cleavage by unknown proteases to give rise to long-acting natriuretic peptide, vessel dilator and kaliuretic peptide. Additional processing gives rise to the auriculin and atriopeptin peptides. In the kidneys, alternative processing by an unknown protease results in the peptide urodilatin. Cleavage by MME initiates degradation of the factor and thereby regulates its activity. Degradation by IDE results in reduced activation of NPR1 (in vitro). During IDE degradation, the resulting products can temporarily stimulate NPR2 to produce cGMP, before the fragments are completely degraded and inactivated by IDE (in vitro). Post-translationally, degraded by IDE. In terms of processing, phosphorylation on Ser-129 decreases vasorelaxant activity.

Its subcellular location is the secreted. The protein resides in the perikaryon. It is found in the cell projection. Its function is as follows. Hormone that plays a key role in mediating cardio-renal homeostasis, and is involved in vascular remodeling and regulating energy metabolism. Acts by specifically binding and stimulating NPR1 to produce cGMP, which in turn activates effector proteins, such as PRKG1, that drive various biological responses. Regulates vasodilation, natriuresis, diuresis and aldosterone synthesis and is therefore essential for regulating blood pressure, controlling the extracellular fluid volume and maintaining the fluid-electrolyte balance. Also involved in inhibiting cardiac remodeling and cardiac hypertrophy by inducing cardiomyocyte apoptosis and attenuating the growth of cardiomyocytes and fibroblasts. Plays a role in female pregnancy by promoting trophoblast invasion and spiral artery remodeling in uterus, and thus prevents pregnancy-induced hypertension. In adipose tissue, acts in various cGMP- and PKG-dependent pathways to regulate lipid metabolism and energy homeostasis. This includes up-regulating lipid metabolism and mitochondrial oxygen utilization by activating the AMP-activated protein kinase (AMPK), and increasing energy expenditure by acting via MAPK11 to promote the UCP1-dependent thermogenesis of brown adipose tissue. Binds the clearance receptor NPR3 which removes the hormone from circulation. May have a role in cardio-renal homeostasis through regulation of natriuresis, diuresis, vasodilation, and inhibiting aldosterone synthesis. In vitro, promotes the production of cGMP and induces vasodilation. May promote natriuresis, at least in part, by enhancing prostaglandin E2 synthesis resulting in the inhibition of renal Na+-K+-ATPase. However reports on the involvement of this peptide in mammal blood volume and blood pressure homeostasis are conflicting; according to a report, in vivo it is not sufficient to activate cGMP and does not inhibit collecting duct transport nor effect diuresis and natriuresis. Appears to bind to specific receptors that are distinct from the receptors bound by atrial natriuretic peptide and vessel dilator. Possibly enhances protein excretion in urine by decreasing proximal tubular protein reabsorption. Functionally, may have a role in cardio-renal homeostasis through regulation of natriuresis, diuresis, and vasodilation. In vitro, promotes the production of cGMP and induces vasodilation. May promote natriuresis, at least in part, by enhancing prostaglandin E2 synthesis resulting in the inhibition of renal Na+-K+-ATPase. However reports on the involvement of this peptide in mammal blood volume and blood pressure homeostasis are conflicting; according to a report it is not sufficient to activate cGMP and does not inhibit collecting duct transport nor effect diuresis and natriuresis. Appears to bind to specific receptors that are distinct from the receptors bound by the atrial natriuretic and long-acting natriuretic peptides. Possibly functions in protein excretion in urine by maintaining the integrity of the proximal tubules and enhancing protein excretion by decreasing proximal tubular protein reabsorption. In terms of biological role, may have a role in cardio-renal homeostasis through regulation of diuresis and inhibiting aldosterone synthesis. In vitro, promotes the production of cGMP and induces vasodilation. May promote natriuresis, at least in part, by enhancing prostaglandin E2 synthesis resulting in the inhibition of renal Na+-K+-ATPase. May have a role in potassium excretion but not sodium excretion (natriuresis). Possibly enhances protein excretion in urine by decreasing proximal tubular protein reabsorption. Its function is as follows. Hormone produced in the kidneys that appears to be important for maintaining cardio-renal homeostasis. Mediates vasodilation, natriuresis and diuresis primarily in the renal system, in order to maintain the extracellular fluid volume and control the fluid-electrolyte balance. Specifically binds and stimulates cGMP production by renal transmembrane receptors, likely NPR1. Urodilatin not ANP, may be the natriuretic peptide responsible for the regulation of sodium and water homeostasis in the kidney. May have a role in cardio-renal homeostasis through regulation of natriuresis and vasodilation. In vivo promotes natriuresis and in vitro, vasodilates renal artery strips. Functionally, may have a role in cardio-renal homeostasis through regulation of regulation of natriuresis and vasodilation. In vivo promotes natriuresis. In vitro, vasodilates intestinal smooth muscle but not smooth muscle strips. In terms of biological role, may have a role in cardio-renal homeostasis through regulation of natriuresis and vasodilation. In vivo promotes natriuresis. In vitro, selectively vasodilates intestinal and vascular smooth muscle strips. Its function is as follows. May have a role in cardio-renal homeostasis through regulation of natriuresis and vasodilation. In vivo promotes natriuresis. In vitro, selectively vasodilates intestinal smooth muscle but not vascular smooth muscle strips. In Felis catus (Cat), this protein is Natriuretic peptides A (NPPA).